An 800-amino-acid polypeptide reads, in one-letter code: Protein SPT2 homolog (800 aa).

The segment at 1 to 687 (MDFHSVLRMA…PGHRPNMQPP (687 aa)) is important for interaction with DNA. Residues 53-82 (QEIQNKEVEAKRKKEGLLAKRKELKHDRKA) are a coiled coil. 3 disordered regions span residues 70–173 (LAKR…PALN), 197–646 (KEER…MAKP), and 661–698 (VPKSINGHMNGMRSAVPPGHRPNMQPPGRPLPPITSSY). Acidic residues predominate over residues 124 to 137 (TEEDEEYMTEEELY). Low complexity predominate over residues 155-164 (PQKVAKAAPG). Positions 196 to 224 (KKEERLRTAEELKELEFLERKAQKADRKD) form a coiled coil. Composition is skewed to basic and acidic residues over residues 197–226 (KEERLRTAEELKELEFLERKAQKADRKDPM) and 249–259 (HSVEKRSHENS). Over residues 260-272 (KSSSTEQNGTFRK) the composition is skewed to polar residues. A compositionally biased stretch (basic and acidic residues) spans 273–295 (SSSDNRSREEKSGSVFHTKDSKF). Composition is skewed to low complexity over residues 328 to 360 (SGSTSLRPSSGGSSSVSGRPSGSSEKPGSSSGK), 367 to 377 (SSSARSSSGSG), 390 to 424 (GASGSGSARSVGESGSRSGKPTGASGSGLARSVGA), 443 to 501 (GVSG…SVSG), and 514 to 581 (GAPG…ASSS). Positions 608 to 626 (NSVRHNTTSISVSARSSLG) are enriched in polar residues. A compositionally biased stretch (pro residues) spans 684-693 (MQPPGRPLPP). The segment at 688–800 (GRPLPPITSS…LKSAKKMKSR (113 aa)) is important for interaction with histones. Residues 756-800 (REQQKEEARSLRLGIQEDLEELRREEEELKQKAKQLKSAKKMKSR) are a coiled coil.

The protein belongs to the SPT2 family. In terms of assembly, interacts with histones. Interacts with a heterotetrameric complex formed by histone H3 and H4, especially when the histone tetramer is not bound to DNA.

Its subcellular location is the nucleus. The protein resides in the nucleolus. In terms of biological role, histone chaperone that stabilizes pre-existing histone tetramers and regulates replication-independent histone exchange on chromatin. Required for normal chromatin refolding in the coding region of transcribed genes, and for the suppression of spurious transcription. Binds DNA and histones and promotes nucleosome assembly (in vitro). Facilitates formation of tetrameric histone complexes containing histone H3 and H4. Modulates RNA polymerase 1-mediated transcription. Binds DNA, with a preference for branched DNA species, such as Y-form DNA and Holliday junction DNA. The chain is Protein SPT2 homolog (spty2d1) from Xenopus laevis (African clawed frog).